Consider the following 382-residue polypeptide: Secreted triacylglycerol lipase LIP5 (382 aa).

Cysteine 40 and cysteine 211 are joined by a disulfide. Asparagine 115 is a glycosylation site (N-linked (GlcNAc...) asparagine). The active-site Nucleophile is serine 124. 2 N-linked (GlcNAc...) asparagine glycosylation sites follow: asparagine 157 and asparagine 232. Residues aspartate 271 and histidine 305 contribute to the active site. Asparagine 346 carries N-linked (GlcNAc...) asparagine glycosylation.

This sequence belongs to the AB hydrolase superfamily. Lipase family. Class Lip subfamily.

It is found in the secreted. The enzyme catalyses a triacylglycerol + H2O = a diacylglycerol + a fatty acid + H(+). It carries out the reaction a monoacylglycerol + H2O = glycerol + a fatty acid + H(+). The catalysed reaction is a diacylglycerol + H2O = a monoacylglycerol + a fatty acid + H(+). Secreted lipase that hydrolyzes acylglycerol lipids such as triacylglycerols and consequently releases free fatty acid. Can hydrolyze 4-nitrophenyl palmitate to release 4-nitrophenol and palmitoic acid. Due to an absence of fatty acid synthase genes in Malassezia species, secretory lipases are essential for the yeast to generate free fatty acids from degradation of sebum and assimilate them as lipid sources for growth. Plays important roles not only in lipid metabolism but also in the immune response of host cells and pathogenesis. This is Secreted triacylglycerol lipase LIP5 from Malassezia furfur (Pityriasis versicolor infection agent).